The primary structure comprises 412 residues: 1-deoxy-D-xylulose 5-phosphate reductoisomerase (412 aa).

Residues Thr-5, Gly-6, Ser-7, Ile-8, Gly-31, Arg-32, Asn-33, and Asn-125 each coordinate NADPH. A 1-deoxy-D-xylulose 5-phosphate-binding site is contributed by Lys-126. Position 127 (Glu-127) interacts with NADPH. A Mn(2+)-binding site is contributed by Asp-151. 1-deoxy-D-xylulose 5-phosphate-binding residues include Ser-152, Glu-153, Ser-189, and His-212. Glu-153 contacts Mn(2+). Residue Gly-218 coordinates NADPH. 1-deoxy-D-xylulose 5-phosphate is bound by residues Ser-225, Asn-230, Lys-231, and Glu-234. Residue Glu-234 participates in Mn(2+) binding.

It belongs to the DXR family. Requires Mg(2+) as cofactor. It depends on Mn(2+) as a cofactor.

It carries out the reaction 2-C-methyl-D-erythritol 4-phosphate + NADP(+) = 1-deoxy-D-xylulose 5-phosphate + NADPH + H(+). The protein operates within isoprenoid biosynthesis; isopentenyl diphosphate biosynthesis via DXP pathway; isopentenyl diphosphate from 1-deoxy-D-xylulose 5-phosphate: step 1/6. Its function is as follows. Catalyzes the NADPH-dependent rearrangement and reduction of 1-deoxy-D-xylulose-5-phosphate (DXP) to 2-C-methyl-D-erythritol 4-phosphate (MEP). The sequence is that of 1-deoxy-D-xylulose 5-phosphate reductoisomerase from Prochlorococcus marinus (strain SARG / CCMP1375 / SS120).